Here is a 227-residue protein sequence, read N- to C-terminus: Phosphoribosylformylglycinamidine synthase subunit PurQ (227 aa).

The Glutamine amidotransferase type-1 domain occupies 3 to 225 (FAVIVLPGSN…VKNWRETHVT (223 aa)). Cys-86 acts as the Nucleophile in catalysis. Active-site residues include His-194 and Glu-196.

As to quaternary structure, part of the FGAM synthase complex composed of 1 PurL, 1 PurQ and 2 PurS subunits.

Its subcellular location is the cytoplasm. It catalyses the reaction N(2)-formyl-N(1)-(5-phospho-beta-D-ribosyl)glycinamide + L-glutamine + ATP + H2O = 2-formamido-N(1)-(5-O-phospho-beta-D-ribosyl)acetamidine + L-glutamate + ADP + phosphate + H(+). It carries out the reaction L-glutamine + H2O = L-glutamate + NH4(+). The protein operates within purine metabolism; IMP biosynthesis via de novo pathway; 5-amino-1-(5-phospho-D-ribosyl)imidazole from N(2)-formyl-N(1)-(5-phospho-D-ribosyl)glycinamide: step 1/2. Part of the phosphoribosylformylglycinamidine synthase complex involved in the purines biosynthetic pathway. Catalyzes the ATP-dependent conversion of formylglycinamide ribonucleotide (FGAR) and glutamine to yield formylglycinamidine ribonucleotide (FGAM) and glutamate. The FGAM synthase complex is composed of three subunits. PurQ produces an ammonia molecule by converting glutamine to glutamate. PurL transfers the ammonia molecule to FGAR to form FGAM in an ATP-dependent manner. PurS interacts with PurQ and PurL and is thought to assist in the transfer of the ammonia molecule from PurQ to PurL. The sequence is that of Phosphoribosylformylglycinamidine synthase subunit PurQ from Bacillus subtilis (strain 168).